A 264-amino-acid chain; its full sequence is Apolipoprotein A-I (264 aa).

A signal peptide spans 1-18 (MKTVVLAVAVLFLTGSQA). 2 repeat units span residues 67-88 (LNLL…EQLG) and 89-110 (PVTQ…REMN). The segment at 67-264 (LNLLENWDTL…EEASKKLNAQ (198 aa)) is 10 X approximate tandem repeats. Position 109 is a methionine sulfoxide (M109). A 3; half-length repeat occupies 111-121 (KDLEEVKAKVQ). Tandem repeats lie at residues 122–143 (PYLD…QKME), 144–165 (PLGA…EKLT), 166–187 (PLGE…TKMT), 188–207 (PYSD…LKDS), and 208–229 (PTLA…EKAK). Methionine sulfoxide is present on M193. A 9; half-length repeat occupies 230 to 240 (PALEDLRQGLM). M240 bears the Methionine sulfoxide mark. Repeat unit 10 spans residues 241–264 (PVFESFKTRIMSMVEEASKKLNAQ).

The protein belongs to the apolipoprotein A1/A4/E family. In terms of assembly, homodimer. Interacts with APOA1BP and CLU. Component of a sperm activating protein complex (SPAP), consisting of APOA1, an immunoglobulin heavy chain, an immunoglobulin light chain and albumin. Interacts with NDRG1. Interacts with SCGB3A2. Interacts with NAXE and YJEFN3. Post-translationally, glycosylated. In terms of processing, palmitoylated. Phosphorylation sites are present in the extracellular medium. In terms of tissue distribution, major protein of plasma HDL, also found in chylomicrons.

The protein resides in the secreted. Participates in the reverse transport of cholesterol from tissues to the liver for excretion by promoting cholesterol efflux from tissues and by acting as a cofactor for the lecithin cholesterol acyltransferase (LCAT). As part of the SPAP complex, activates spermatozoa motility. The sequence is that of Apolipoprotein A-I (APOAI) from Mesocricetus auratus (Golden hamster).